The following is a 204-amino-acid chain: Nascent polypeptide-associated complex subunit alpha (204 aa).

A compositionally biased stretch (basic and acidic residues) spans 1-19 (MADPRVEELPDEEVPKANV). 2 disordered regions span residues 1–47 (MADP…IHSR) and 118–167 (QLAA…GLEA). The span at 22–32 (AGSDSESEAGE) shows a compositional bias: acidic residues. The 66-residue stretch at 46-111 (SRNEKKARKA…AKIEDLNSQA (66 aa)) folds into the NAC-A/B domain. A compositionally biased stretch (low complexity) spans 118–128 (QLAAAEAAAGE). Over residues 129 to 151 (HAGHDHDHDHGKGKAPETEAKKE) the composition is skewed to basic and acidic residues. Acidic residues predominate over residues 152 to 164 (EEEDDGEEVDETG). A UBA domain is found at 165–204 (LEAKDIELVMAQANVSRKKAVKALRENDNDIVNSIMALSI).

The protein belongs to the NAC-alpha family. As to quaternary structure, part of the nascent polypeptide-associated complex (NAC), consisting of egd2 and egd1. NAC associates with ribosomes via egd1.

The protein localises to the cytoplasm. It localises to the nucleus. In terms of biological role, component of the nascent polypeptide-associated complex (NAC), a dynamic component of the ribosomal exit tunnel, protecting the emerging polypeptides from interaction with other cytoplasmic proteins to ensure appropriate nascent protein targeting. The NAC complex also promotes mitochondrial protein import by enhancing productive ribosome interactions with the outer mitochondrial membrane and blocks the inappropriate interaction of ribosomes translating non-secretory nascent polypeptides with translocation sites in the membrane of the endoplasmic reticulum. Egd2 may also be involved in transcription regulation. This is Nascent polypeptide-associated complex subunit alpha (egd2) from Aspergillus fumigatus (strain ATCC MYA-4609 / CBS 101355 / FGSC A1100 / Af293) (Neosartorya fumigata).